Reading from the N-terminus, the 177-residue chain is MYLVLLIAVILFIIVILMIFLISGLFYPEQEPALPISPPKKKCKTDTDCKDKGHHCVGGICTNMSCLDAIKYDIKDIKLDPNIRSCNYTPKFYKFSNTTADLQSPFGKTRIDDAELYDPHSGEDFCQRLCLDRKDCIGWEFDQYYAKTTGECYFYIDPHPALKSKNDAVLAIARKVS.

The Intravirion portion of the chain corresponds to 1–7; it reads MYLVLLI. The helical transmembrane segment at 8 to 24 threads the bilayer; that stretch reads AVILFIIVILMIFLISG. Topologically, residues 25 to 166 are virion surface; sequence LFYPEQEPAL…DPHPALKSKN (142 aa).

The protein belongs to the asfivirus envelope protein p22 family.

It localises to the virion membrane. The protein localises to the host cell membrane. This is Putative membrane protein 165 from African swine fever virus (isolate Pig/Kenya/KEN-50/1950) (ASFV).